The primary structure comprises 529 residues: [Pyruvate dehydrogenase [acetyl-transferring]]-phosphatase 2, mitochondrial (529 aa).

The N-terminal 66 residues, 1-66 (MSSTVSYWIL…FTLCKAYRHT (66 aa)), are a transit peptide targeting the mitochondrion. Residues 106–517 (VLRFESNQLA…DDITVTVVYF (412 aa)) enclose the PPM-type phosphatase domain. Mn(2+) is bound by residues Asp141, Gly142, Asp412, and Asp508.

It belongs to the PP2C family. The cofactor is Mg(2+).

Its subcellular location is the mitochondrion. It catalyses the reaction O-phospho-L-seryl-[pyruvate dehydrogenase E1 alpha subunit] + H2O = L-seryl-[pyruvate dehydrogenase E1 alpha subunit] + phosphate. Mitochondrial enzyme that catalyzes the dephosphorylation and concomitant reactivation of the alpha subunit of the E1 component of the pyruvate dehydrogenase complex (PDC), thereby stimulating the conversion of pyruvate into acetyl-CoA. Acts as a crucial regulator of T cell metabolism and function, with a particular focus on T-helper Th17. The chain is [Pyruvate dehydrogenase [acetyl-transferring]]-phosphatase 2, mitochondrial from Homo sapiens (Human).